The following is a 346-amino-acid chain: Phosphoribosylformylglycinamidine cyclo-ligase (346 aa).

Belongs to the AIR synthase family.

Its subcellular location is the cytoplasm. It catalyses the reaction 2-formamido-N(1)-(5-O-phospho-beta-D-ribosyl)acetamidine + ATP = 5-amino-1-(5-phospho-beta-D-ribosyl)imidazole + ADP + phosphate + H(+). The protein operates within purine metabolism; IMP biosynthesis via de novo pathway; 5-amino-1-(5-phospho-D-ribosyl)imidazole from N(2)-formyl-N(1)-(5-phospho-D-ribosyl)glycinamide: step 2/2. The chain is Phosphoribosylformylglycinamidine cyclo-ligase from Bacillus cereus (strain G9842).